Consider the following 179-residue polypeptide: Large ribosomal subunit protein uL5 (179 aa).

It belongs to the universal ribosomal protein uL5 family. In terms of assembly, part of the 50S ribosomal subunit; part of the 5S rRNA/L5/L18/L25 subcomplex. Contacts the 5S rRNA and the P site tRNA. Forms a bridge to the 30S subunit in the 70S ribosome.

In terms of biological role, this is one of the proteins that bind and probably mediate the attachment of the 5S RNA into the large ribosomal subunit, where it forms part of the central protuberance. In the 70S ribosome it contacts protein S13 of the 30S subunit (bridge B1b), connecting the 2 subunits; this bridge is implicated in subunit movement. Contacts the P site tRNA; the 5S rRNA and some of its associated proteins might help stabilize positioning of ribosome-bound tRNAs. The sequence is that of Large ribosomal subunit protein uL5 from Nitrosomonas eutropha (strain DSM 101675 / C91 / Nm57).